We begin with the raw amino-acid sequence, 757 residues long: Dynamin-related protein DNM1 (757 aa).

Residues 25-333 form the Dynamin-type G domain; sequence TLDLPILAVV…LLSHIRDKLP (309 aa). Positions 35–42 are G1 motif; sequence GSQSSGKS. GTP is bound at residue 35 to 42; it reads GSQSSGKS. The tract at residues 61-63 is G2 motif; sequence VTR. Residues 175–178 form a G3 motif region; that stretch reads DLPG. GTP contacts are provided by residues 175 to 179 and 244 to 247; these read DLPGI and TKLD. Positions 244-247 are G4 motif; the sequence is TKLD. Positions 274–277 are G5 motif; that stretch reads VNRS. Residues 557–597 are disordered; it reads SKLSQQENGQTNGINGTSSISSNIDQDSAKNSDYDDDGIDA. Positions 567-580 are enriched in low complexity; that stretch reads TNGINGTSSISSNI. Ser629 bears the Phosphoserine mark. The region spanning 670–757 is the GED domain; sequence CELIKRLIVS…KAATLISNIL (88 aa).

It belongs to the TRAFAC class dynamin-like GTPase superfamily. Dynamin/Fzo/YdjA family. Interacts with FIS1 and MDV1.

The protein resides in the mitochondrion outer membrane. It carries out the reaction GTP + H2O = GDP + phosphate + H(+). In terms of biological role, microtubule-associated force-producing protein that participates mitochondrial fission. Fission of mitochondria occurs in many cell types and constitutes an important step in mitochondria morphology, which is balanced between fusion and fission. Functions antagonistically with FZO1. The polypeptide is Dynamin-related protein DNM1 (DNM1) (Saccharomyces cerevisiae (strain ATCC 204508 / S288c) (Baker's yeast)).